Reading from the N-terminus, the 336-residue chain is Peroxidase 72 (336 aa).

The N-terminal stretch at Met1 to Cys23 is a signal peptide. Disulfide bonds link Cys42–Cys122, Cys75–Cys80, Cys128–Cys329, and Cys207–Cys239. His73 (proton acceptor) is an active-site residue. 5 residues coordinate Ca(2+): Asp74, Val77, Gly79, Asp81, and Ser83. A substrate-binding site is contributed by Pro170. An N-linked (GlcNAc...) asparagine glycan is attached at Asn173. His200 serves as a coordination point for heme b. A Ca(2+)-binding site is contributed by Thr201. An N-linked (GlcNAc...) asparagine glycan is attached at Asn216. Asp252, Thr255, and Asp260 together coordinate Ca(2+).

The protein belongs to the peroxidase family. Classical plant (class III) peroxidase subfamily. Heme b serves as cofactor. The cofactor is Ca(2+). Slightly expressed in roots.

The protein localises to the secreted. It catalyses the reaction 2 a phenolic donor + H2O2 = 2 a phenolic radical donor + 2 H2O. Its function is as follows. Removal of H(2)O(2), oxidation of toxic reductants, biosynthesis and degradation of lignin, suberization, auxin catabolism, response to environmental stresses such as wounding, pathogen attack and oxidative stress. These functions might be dependent on each isozyme/isoform in each plant tissue. The polypeptide is Peroxidase 72 (PER72) (Arabidopsis thaliana (Mouse-ear cress)).